Here is a 427-residue protein sequence, read N- to C-terminus: Enolase (427 aa).

Residue Gln-163 participates in (2R)-2-phosphoglycerate binding. Glu-205 functions as the Proton donor in the catalytic mechanism. The Mg(2+) site is built by Asp-242, Glu-285, and Asp-312. (2R)-2-phosphoglycerate contacts are provided by Lys-337, Arg-366, Ser-367, and Lys-388. Catalysis depends on Lys-337, which acts as the Proton acceptor.

Belongs to the enolase family. Mg(2+) serves as cofactor.

Its subcellular location is the cytoplasm. The protein resides in the secreted. The protein localises to the cell surface. The catalysed reaction is (2R)-2-phosphoglycerate = phosphoenolpyruvate + H2O. Its pathway is carbohydrate degradation; glycolysis; pyruvate from D-glyceraldehyde 3-phosphate: step 4/5. In terms of biological role, catalyzes the reversible conversion of 2-phosphoglycerate (2-PG) into phosphoenolpyruvate (PEP). It is essential for the degradation of carbohydrates via glycolysis. This Bradyrhizobium sp. (strain BTAi1 / ATCC BAA-1182) protein is Enolase.